A 300-amino-acid chain; its full sequence is 4-hydroxy-tetrahydrodipicolinate synthase (300 aa).

Residue Thr-49 coordinates pyruvate. Tyr-137 acts as the Proton donor/acceptor in catalysis. The active-site Schiff-base intermediate with substrate is Lys-165. Residue Ile-207 coordinates pyruvate.

This sequence belongs to the DapA family. As to quaternary structure, homotetramer; dimer of dimers.

It localises to the cytoplasm. It catalyses the reaction L-aspartate 4-semialdehyde + pyruvate = (2S,4S)-4-hydroxy-2,3,4,5-tetrahydrodipicolinate + H2O + H(+). It functions in the pathway amino-acid biosynthesis; L-lysine biosynthesis via DAP pathway; (S)-tetrahydrodipicolinate from L-aspartate: step 3/4. Catalyzes the condensation of (S)-aspartate-beta-semialdehyde [(S)-ASA] and pyruvate to 4-hydroxy-tetrahydrodipicolinate (HTPA). This chain is 4-hydroxy-tetrahydrodipicolinate synthase, found in Nitrosospira multiformis (strain ATCC 25196 / NCIMB 11849 / C 71).